Consider the following 777-residue polypeptide: Elongation factor G, mitochondrial (777 aa).

Residues 34 to 338 (LRQRNVGISA…GMCAYLPNPM (305 aa)) enclose the tr-type G domain. GTP-binding positions include 43–50 (AHIDSGKT), 136–140 (DTPGH), and 190–193 (NKMD).

Belongs to the TRAFAC class translation factor GTPase superfamily. Classic translation factor GTPase family. EF-G/EF-2 subfamily.

It localises to the mitochondrion. The protein operates within protein biosynthesis; polypeptide chain elongation. Functionally, mitochondrial GTPase that catalyzes the GTP-dependent ribosomal translocation step during translation elongation. During this step, the ribosome changes from the pre-translocational (PRE) to the post-translocational (POST) state as the newly formed A-site-bound peptidyl-tRNA and P-site-bound deacylated tRNA move to the P and E sites, respectively. Catalyzes the coordinated movement of the two tRNA molecules, the mRNA and conformational changes in the ribosome. In Malassezia globosa (strain ATCC MYA-4612 / CBS 7966) (Dandruff-associated fungus), this protein is Elongation factor G, mitochondrial.